Consider the following 379-residue polypeptide: Glutamate 5-kinase (379 aa).

An ATP-binding site is contributed by K19. Substrate is bound by residues S59, D146, and N158. Residues 178–179 and 220–226 contribute to the ATP site; these read TD and TGGMATK. The PUA domain maps to 285 to 363; the sequence is SGDIIIDDGA…KDIISILGHD (79 aa).

This sequence belongs to the glutamate 5-kinase family.

It localises to the cytoplasm. The enzyme catalyses L-glutamate + ATP = L-glutamyl 5-phosphate + ADP. It participates in amino-acid biosynthesis; L-proline biosynthesis; L-glutamate 5-semialdehyde from L-glutamate: step 1/2. In terms of biological role, catalyzes the transfer of a phosphate group to glutamate to form L-glutamate 5-phosphate. This is Glutamate 5-kinase from Vibrio parahaemolyticus serotype O3:K6 (strain RIMD 2210633).